The chain runs to 70 residues: DNA-directed RNA polymerase subunit omega (70 aa).

Belongs to the RNA polymerase subunit omega family. As to quaternary structure, the RNAP catalytic core consists of 2 alpha, 1 beta, 1 beta' and 1 omega subunit. When a sigma factor is associated with the core the holoenzyme is formed, which can initiate transcription.

The enzyme catalyses RNA(n) + a ribonucleoside 5'-triphosphate = RNA(n+1) + diphosphate. In terms of biological role, promotes RNA polymerase assembly. Latches the N- and C-terminal regions of the beta' subunit thereby facilitating its interaction with the beta and alpha subunits. The polypeptide is DNA-directed RNA polymerase subunit omega (Staphylococcus epidermidis (strain ATCC 35984 / DSM 28319 / BCRC 17069 / CCUG 31568 / BM 3577 / RP62A)).